Consider the following 681-residue polypeptide: Serine/threonine-protein kinase PAK 6 (681 aa).

Disordered regions lie at residues 1–30 (MFRK…DPKE), 200–256 (QSSP…ESSL), and 268–355 (TAAT…PRTW). Positions 12–25 (ISAPQNFQHRVHTS) constitute a CRIB domain. The linker stretch occupies residues 26-406 (FDPKEGKFVG…VVDQGDPRLL (381 aa)). 2 stretches are compositionally biased toward low complexity: residues 201 to 212 (SSPPGASPPTGT) and 268 to 278 (TAATAPPSSSK). The segment covering 308 to 333 (SLPSDQPVGTFSPLTTSDTSSPQKSL) has biased composition (polar residues). The region spanning 407-658 (LDSYVKIGEG…AQELLDHPFL (252 aa)) is the Protein kinase domain. Residues 413–421 (IGEGSTGIV) and Lys-436 each bind ATP. Asp-526 functions as the Proton acceptor in the catalytic mechanism. Ser-560 bears the Phosphoserine; by autocatalysis mark.

Belongs to the protein kinase superfamily. STE Ser/Thr protein kinase family. STE20 subfamily. As to quaternary structure, interacts tightly with GTP-bound but not GDP-bound CDC42/p21 and RAC1. Interacts with the androgen receptor AR. Interacts with IQGAP1 and PPM1B. In terms of processing, autophosphorylated. Phosphorylated by MAP2K6/MAPKK6, leading to PAK6 activation.

The protein localises to the cytoplasm. It is found in the nucleus. The catalysed reaction is L-seryl-[protein] + ATP = O-phospho-L-seryl-[protein] + ADP + H(+). It carries out the reaction L-threonyl-[protein] + ATP = O-phospho-L-threonyl-[protein] + ADP + H(+). Its function is as follows. Serine/threonine protein kinase that plays a role in the regulation of gene transcription. The kinase activity is induced by various effectors including AR or MAP2K6/MAPKK6. Phosphorylates the DNA-binding domain of androgen receptor/AR and thereby inhibits AR-mediated transcription. Also inhibits ESR1-mediated transcription. May play a role in cytoskeleton regulation by interacting with IQGAP1. May protect cells from apoptosis through phosphorylation of BAD. The sequence is that of Serine/threonine-protein kinase PAK 6 (PAK6) from Pongo abelii (Sumatran orangutan).